Reading from the N-terminus, the 555-residue chain is Cyclin-T1.2 (555 aa).

Disordered stretches follow at residues 315–429 (SYKG…NSSK) and 505–555 (PADS…GELV). The segment covering 321 to 335 (KPLSNSSDSPSTRPS) has biased composition (low complexity). Over residues 341-359 (KNQKVVEQELMEQRMKEAA) the composition is skewed to basic and acidic residues. Residues 382–398 (TSSSASNNSNHQNRSSS) show a composition bias toward low complexity. The span at 521 to 543 (PDEPSPPVSQILLPPPPPPPILP) shows a compositional bias: pro residues.

The protein belongs to the cyclin family. Cyclin C subfamily.

Its function is as follows. Regulatory subunit of the cyclin-dependent kinase pair (CDK9/cyclin T) complex, also called positive transcription elongation factor B (P-TEFb), which is proposed to facilitate the transition from abortive to production elongation by phosphorylating the CTD (carboxy-terminal domain) of the large subunit of RNA polymerase II (RNAP II). The polypeptide is Cyclin-T1.2 (cit-1.2) (Caenorhabditis elegans).